The chain runs to 399 residues: MVVRSLLRVSRLTSASCRHASLAVSSTPKPYIPSVTGVQKSMPFDNLLEQYSRVHWDDSVTYDDPNVQKLFKSLMSGSRAALASAITLVESRHPTKRAQGNMLLKMVLDEEREKYKKFGRDSMIFRVGISGSPGVGKSSFIEALGAELTENRGKKVAVLTIDPTSAMTGGSVLGDLTRMQELSRNPKAYIRQSPTSGSLGGVTRGIHEAVILCEGAGYDIVIIETVGVGQSETSVSDMCDMMCLLLSPAHGDELQGVKRGIMEMSDLLVVTKDDGDLKAKAKMTQAEYISALKFMRPRLDVWRPKVMRSSIMDKESVSEVCSSLYEFWDTIGESGDLERRRQDQMKKWMWNHVKDEIMSVFQKHPKIAHLAPKLENEIRSGKITPGLAAETMIRTFFGV.

A mitochondrion-targeting transit peptide spans 1 to 15 (MVVRSLLRVSRLTSA). GTP contacts are provided by residues 131–139 (GSPGVGKSS), Asp-274, and 310–312 (SIM).

Belongs to the SIMIBI class G3E GTPase family. ArgK/MeaB subfamily.

It localises to the mitochondrion. Functionally, may have GTPase activity. May also bind and hydrolyze ATP. May function as chaperone. Likely to have a role in propionyl-CoA and adenosylcobalamin metabolism. The sequence is that of Methylmalonic aciduria type A homolog, mitochondrial (mmaa-1) from Caenorhabditis elegans.